Consider the following 705-residue polypeptide: MSTIFSAEFAGRNISIKTGYVAGQADGAVMVIYGDTVVMVTAVSLKTAREGVDFLPLTVDYQEMTYAAGKIPGGFFKREGRPNEREILTSRVIDRSIRPLFPKGYCYETQLVATVLSVDSENDSDVAALLAASAALEISDIPFKGPIVGVRVGRVDGQFICNPSKLEQEKGDLNLYLVGRKVVPGTEGRPYDVNLVMLEGEAQQVEEEHVIAGIDFGLECMRPVIELQDQLRSALGKPKREFEAVEIDDALLAEVSEKAAVRMREAYRMSRKLDRHAALDEIRNSVLKAVTADEAGLRLRTAAALEALEKRIVRDVILKEKQRIDGRSYAEIRAISAEVGILPRAHGSALFNRGETQSLAALALGTSSDEQRLDYVAGEETRSFILHYNFPPYCVGEARPLRSPGRREIGHGNLARKALMPVIPSPEEFPYTIRIVSEILSSNGSSSMATVCGGLLCLMDGGVPVKGVVAGIAMGLLKEGEQVVILSDILGDEDHAGDMDFKVCGTSKGITAMQMDIKIDGINEDILRKALAQAREGRLFIIDKILATISEPRKELSIYAPRITTVKVKPEKVRAVIGTGGKNIRQIVSETGVTIDVEDDGTVTIASSDMEASARAIAMVRWLTEDAEVGKIYRGTVKKVVDFGAFVEILPGTEGLLHISQLAKERVNKVTDIVNEGDEVIVKVLEVDKQGKIRLSRKEALGSDI.

Residues Asp-494 and Asp-500 each coordinate Mg(2+). The 60-residue stretch at 561 to 620 folds into the KH domain; sequence PRITTVKVKPEKVRAVIGTGGKNIRQIVSETGVTIDVEDDGTVTIASSDMEASARAIAMV. Residues 630–698 enclose the S1 motif domain; that stretch reads GKIYRGTVKK…KQGKIRLSRK (69 aa).

The protein belongs to the polyribonucleotide nucleotidyltransferase family. It depends on Mg(2+) as a cofactor.

The protein resides in the cytoplasm. It catalyses the reaction RNA(n+1) + phosphate = RNA(n) + a ribonucleoside 5'-diphosphate. In terms of biological role, involved in mRNA degradation. Catalyzes the phosphorolysis of single-stranded polyribonucleotides processively in the 3'- to 5'-direction. The chain is Polyribonucleotide nucleotidyltransferase from Syntrophus aciditrophicus (strain SB).